The primary structure comprises 299 residues: Proline iminopeptidase (299 aa).

An AB hydrolase-1 domain is found at Pro29–Pro279. Ser105 functions as the Nucleophile in the catalytic mechanism. The active site involves Asp245. The active-site Proton donor is the His272.

Belongs to the peptidase S33 family.

The protein resides in the cell envelope. The catalysed reaction is Release of N-terminal proline from a peptide.. In terms of biological role, releases the N-terminal proline from various substrates. The protein is Proline iminopeptidase of Levilactobacillus brevis (strain ATCC 367 / BCRC 12310 / CIP 105137 / JCM 1170 / LMG 11437 / NCIMB 947 / NCTC 947) (Lactobacillus brevis).